The following is a 149-amino-acid chain: Transthyretin (149 aa).

Positions 1 to 20 are cleaved as a signal peptide; sequence MAFHSLLLLCLAGLVFLSEA. Sulfocysteine is present on cysteine 32. Lysine 37 provides a ligand contact to L-thyroxine. A 4-carboxyglutamate modification is found at glutamate 64. Residues glutamate 76 and serine 139 each coordinate L-thyroxine.

Belongs to the transthyretin family. In terms of assembly, homotetramer. Dimer of dimers. In the homotetramer, subunits assemble around a central channel that can accommodate two ligand molecules. Interacts with RBP4. Sulfonation of the reactive cysteine Cys-32 enhances the stability of the native conformation of TTR, avoiding misassembly of the protein leading to amyloid formation. As to expression, highly expressed in the choroid plexus.

The protein localises to the secreted. In terms of biological role, thyroid hormone-binding protein. Probably transports thyroxine from the bloodstream to the brain. This is Transthyretin (TTR) from Sminthopsis macroura (Stripe-faced dunnart).